Consider the following 149-residue polypeptide: Flavodoxin YqcA (149 aa).

In terms of domain architecture, Flavodoxin-like spans 4–145 (IGIFVGTMYG…ESNPWVEQWG (142 aa)). FMN is bound by residues 10–15 (TMYGNS) and 99–101 (NFC).

Belongs to the flavodoxin family. MioC subfamily. In terms of assembly, monomer. The cofactor is FMN.

Its function is as follows. Probable electron transporter. This Escherichia coli (strain K12) protein is Flavodoxin YqcA (yqcA).